Consider the following 343-residue polypeptide: N-acetyl-gamma-glutamyl-phosphate reductase (343 aa).

The active site involves Cys147.

Belongs to the NAGSA dehydrogenase family. Type 1 subfamily.

The protein localises to the cytoplasm. The catalysed reaction is N-acetyl-L-glutamate 5-semialdehyde + phosphate + NADP(+) = N-acetyl-L-glutamyl 5-phosphate + NADPH + H(+). It participates in amino-acid biosynthesis; L-arginine biosynthesis; N(2)-acetyl-L-ornithine from L-glutamate: step 3/4. Catalyzes the NADPH-dependent reduction of N-acetyl-5-glutamyl phosphate to yield N-acetyl-L-glutamate 5-semialdehyde. This Listeria monocytogenes serotype 4b (strain CLIP80459) protein is N-acetyl-gamma-glutamyl-phosphate reductase.